Here is a 335-residue protein sequence, read N- to C-terminus: MSEPAQKKQKVANNSLEQLKASGTVVVADTGDFGSIAKFQPQDSTTNPSLILAAAKQPTYAKLIDVAVEYGKKHGKTTEEQVENAVDRLLVEFGKEILKIVPGRVSTEVDARLSFDTQATIEKARHIIKLFEQEGVSKERVLIKIASTWEGIQAAKELEEKDGIHCNLTLLFSFVQAVACAEAQVTLISPFVGRILDWYKSSTGKDYKGEADPGVISVKKIYNYYKKYGYKTIVMGASFRSTDEIKNLAGVDYLTISPALLDKLMNSTEPFPRVLDPVSAKKEAGDKISYISDESKFRFDLNEDAMATEKLSEGIRKFSADIVTLFDLIEKKVTA.

The residue at position 2 (serine 2) is an N-acetylserine. Lysine 144 acts as the Schiff-base intermediate with substrate in catalysis.

Belongs to the transaldolase family. Type 1 subfamily. In terms of assembly, homodimer.

It catalyses the reaction D-sedoheptulose 7-phosphate + D-glyceraldehyde 3-phosphate = D-erythrose 4-phosphate + beta-D-fructose 6-phosphate. The protein operates within carbohydrate degradation; pentose phosphate pathway; D-glyceraldehyde 3-phosphate and beta-D-fructose 6-phosphate from D-ribose 5-phosphate and D-xylulose 5-phosphate (non-oxidative stage): step 2/3. Transaldolase is important for the balance of metabolites in the pentose-phosphate pathway. The polypeptide is Transaldolase (TAL1) (Saccharomyces cerevisiae (strain ATCC 204508 / S288c) (Baker's yeast)).